A 586-amino-acid polypeptide reads, in one-letter code: Eukaryotic translation initiation factor 3 subunit D (586 aa).

The segment at 107 to 154 is disordered; sequence FGRGGGTVFRGRAQRGGAGQRGGRAGFQRVGAGRGQGGDRYYDNRGAR. A compositionally biased stretch (gly residues) spans 108–131; that stretch reads GRGGGTVFRGRAQRGGAGQRGGRA. The tract at residues 301–315 is RNA gate; that stretch reads SLDLVTVNENAADAP. A compositionally biased stretch (acidic residues) spans 566–577; the sequence is FEEDDEAAEEEQ. Residues 566–586 form a disordered region; sequence FEEDDEAAEEEQEAKGEVEEA.

It belongs to the eIF-3 subunit D family. As to quaternary structure, component of the eukaryotic translation initiation factor 3 (eIF-3) complex.

The protein localises to the cytoplasm. MRNA cap-binding component of the eukaryotic translation initiation factor 3 (eIF-3) complex, which is involved in protein synthesis of a specialized repertoire of mRNAs and, together with other initiation factors, stimulates binding of mRNA and methionyl-tRNAi to the 40S ribosome. The eIF-3 complex specifically targets and initiates translation of a subset of mRNAs involved in cell proliferation. In the eIF-3 complex, eif3d specifically recognizes and binds the 7-methylguanosine cap of a subset of mRNAs. The protein is Eukaryotic translation initiation factor 3 subunit D of Emericella nidulans (strain FGSC A4 / ATCC 38163 / CBS 112.46 / NRRL 194 / M139) (Aspergillus nidulans).